We begin with the raw amino-acid sequence, 542 residues long: Monocarboxylate transporter 3 (542 aa).

Residues 1 to 19 (MGRADPEEGQLPAPVKPPD) are Cytoplasmic-facing. The chain crosses the membrane as a helical span at residues 20 to 40 (GGWGWIVLFGCFVITGFSYAF). The Extracellular portion of the chain corresponds to 41 to 63 (PKAVSVYFKELMKDFHVGYSDTA). Residues 64 to 84 (WISSIMLAMLYGTGPVCSIMV) traverse the membrane as a helical segment. The Cytoplasmic portion of the chain corresponds to 85–93 (NQFGCRPVM). Residues 94–114 (LIGGLLASSGMILASFTTNII) form a helical membrane-spanning segment. Residues 115 to 119 (ELYLT) lie on the Extracellular side of the membrane. Residues 120 to 140 (AGVLTGLGMALNFQPSLIMLG) traverse the membrane as a helical segment. The Cytoplasmic segment spans residues 141–152 (TYFDKRRPLANG). Residues 153–173 (LAAAGSPVFLSSLSPLGQVLL) form a helical membrane-spanning segment. Over 174–181 (EKFGWRGG) the chain is Extracellular. A helical transmembrane segment spans residues 182–202 (FLIMGGLLLNCCTCGAVMRPL). Residues 203 to 265 (DAGMKRKTEK…LDFSIFSNRG (63 aa)) are Cytoplasmic-facing. Residues 226–247 (GGKSEEGISTTDGTKKTKKAKK) are disordered. Residues 266–286 (FIIYTISKFILVLGLFVPPIL) form a helical membrane-spanning segment. The Extracellular portion of the chain corresponds to 287–301 (LVNYAKDTGVPDTEA). The chain crosses the membrane as a helical span at residues 302 to 322 (AFLLSIIGFIDIFARPACGMV). Over 323 to 330 (AGLKWVRP) the chain is Cytoplasmic. Residues 331–351 (HVAYLFSFAMLFNGLTDICSA) form a helical membrane-spanning segment. Over 352–357 (RASNYT) the chain is Extracellular. A helical membrane pass occupies residues 358–378 (GLVIFCVFFGISYGMVGALQF). Over 379–392 (EVLMAIVGSQKFSS) the chain is Cytoplasmic. Residues 393-413 (AIGLVLLIEAFAVLIGPPSAG) traverse the membrane as a helical segment. Residues 414-423 (RLVDALKNYE) are Extracellular-facing. The helical transmembrane segment at 424-444 (VIFYLAGSEVVLSALFLAMAT) threads the bilayer. Over 445 to 542 (YCCLNRGKKT…ADQTVERDSF (98 aa)) the chain is Cytoplasmic. A disordered region spans residues 453–542 (KTPPPEKNPS…ADQTVERDSF (90 aa)). 2 basolateral sorting signal regions span residues 465-510 (GGSD…VEDE) and 511-532 (QSGE…AGCN). A compositionally biased stretch (acidic residues) spans 468–478 (DTEEAESDVQE).

The protein belongs to the major facilitator superfamily. Monocarboxylate porter (TC 2.A.1.13) family. Retinal pigment epithelium.

Its subcellular location is the basolateral cell membrane. It catalyses the reaction (S)-lactate(in) + H(+)(in) = (S)-lactate(out) + H(+)(out). Its function is as follows. Probable retinal pigment epithelium (RPE)-specific proton-coupled L-lactate transporter. May facilitate transport of lactate and H(+) out of the retina and could therefore play a role in pH and ion homeostasis of the outer retina. The sequence is that of Monocarboxylate transporter 3 (SLC16A8) from Gallus gallus (Chicken).